The chain runs to 92 residues: Large ribosomal subunit protein eL43y (92 aa).

The C4-type zinc finger occupies 39–60 (CEFCGKYGVKRKAVGIWGCKDC).

This sequence belongs to the eukaryotic ribosomal protein eL43 family.

The polypeptide is Large ribosomal subunit protein eL43y (RPL37AC) (Arabidopsis thaliana (Mouse-ear cress)).